We begin with the raw amino-acid sequence, 312 residues long: Protoheme IX farnesyltransferase (312 aa).

Transmembrane regions (helical) follow at residues 33 to 53, 54 to 74, 105 to 125, 126 to 146, 154 to 174, 181 to 201, 243 to 263, and 291 to 311; these read VMLL…VSIN, PLYG…AGAL, FIFG…FVNW, FAAL…TIWL, IVIG…AATG, FLLF…LSLF, IIGF…IIFI, and FYLA…CFII.

It belongs to the UbiA prenyltransferase family. Protoheme IX farnesyltransferase subfamily.

It is found in the cell inner membrane. The enzyme catalyses heme b + (2E,6E)-farnesyl diphosphate + H2O = Fe(II)-heme o + diphosphate. Its pathway is porphyrin-containing compound metabolism; heme O biosynthesis; heme O from protoheme: step 1/1. In terms of biological role, converts heme B (protoheme IX) to heme O by substitution of the vinyl group on carbon 2 of heme B porphyrin ring with a hydroxyethyl farnesyl side group. This is Protoheme IX farnesyltransferase from Bartonella henselae (strain ATCC 49882 / DSM 28221 / CCUG 30454 / Houston 1) (Rochalimaea henselae).